Reading from the N-terminus, the 1049-residue chain is RIMS-binding protein 2 (1049 aa).

Positions 164 to 231 (GKVHLCVARY…PSNFVDFIQD (68 aa)) constitute an SH3 1 domain. Fibronectin type-III domains lie at 294–387 (VPYP…GKDV), 390–471 (APSQ…EKDE), and 486–587 (PPQD…VPPA). Disordered stretches follow at residues 580-664 (PDLL…VSTT), 694-714 (SAGPYANSDEEDGYASPEVKR), and 728-750 (LGQQPHCCHGDEYHTESSRGSDL). Residues 582-598 (LLVPPAPHPRTAPPPKP) show a composition bias toward pro residues. Residues 603–616 (MDTKDLGPHVKVDE) are compositionally biased toward basic and acidic residues. Over residues 641–651 (GPGRRSPSPSR) the composition is skewed to low complexity. 2 positions are modified to phosphoserine: serine 701 and serine 709. Over residues 735–746 (CHGDEYHTESSR) the composition is skewed to basic and acidic residues. Phosphoserine is present on residues serine 832 and serine 839. At threonine 841 the chain carries Phosphothreonine. 2 consecutive SH3 domains span residues 848–916 (LPAR…EIHA) and 952–1019 (VPTR…EVPD). The segment at 1024–1049 (HLSDAPPHYSHDPPMRTKAKRVSQPP) is disordered. The span at 1040-1049 (TKAKRVSQPP) shows a compositional bias: basic residues.

The protein belongs to the RIMBP family. In terms of assembly, interacts with CACNA1D and CACNA1B, and potentially with other Ca(2+) channel alpha-1 isoforms. Interacts with RIMS1 and RIMS2.

It is found in the cell membrane. It localises to the synapse. Plays a role in the synaptic transmission as bifunctional linker that interacts simultaneously with RIMS1, RIMS2, CACNA1D and CACNA1B. The chain is RIMS-binding protein 2 (Rimbp2) from Rattus norvegicus (Rat).